The sequence spans 354 residues: Replication factor C subunit 3 (354 aa).

41–48 (GPSGSGKK) provides a ligand contact to ATP.

It belongs to the activator 1 small subunits family. Heterotetramer of subunits RFC2, RFC3, RFC4 and RFC5 that can form a complex with RFC1.

It is found in the nucleus. Its function is as follows. May be involved in DNA replication and thus regulate cell proliferation. This is Replication factor C subunit 3 (RFC3) from Arabidopsis thaliana (Mouse-ear cress).